The primary structure comprises 66 residues: Large ribosomal subunit protein uL29 (66 aa).

It belongs to the universal ribosomal protein uL29 family.

The chain is Large ribosomal subunit protein uL29 from Rhizobium etli (strain CIAT 652).